A 498-amino-acid polypeptide reads, in one-letter code: Lysine--tRNA ligase (498 aa).

Mg(2+) contacts are provided by Glu411 and Glu418.

This sequence belongs to the class-II aminoacyl-tRNA synthetase family. In terms of assembly, homodimer. Mg(2+) serves as cofactor.

Its subcellular location is the cytoplasm. The enzyme catalyses tRNA(Lys) + L-lysine + ATP = L-lysyl-tRNA(Lys) + AMP + diphosphate. This is Lysine--tRNA ligase from Enterococcus faecalis (strain ATCC 700802 / V583).